Reading from the N-terminus, the 140-residue chain is Small ribosomal subunit protein eS17x (140 aa).

It belongs to the eukaryotic ribosomal protein eS17 family.

The sequence is that of Small ribosomal subunit protein eS17x (RPS17C) from Arabidopsis thaliana (Mouse-ear cress).